The chain runs to 61 residues: Small ribosomal subunit protein uS14B (61 aa).

The Zn(2+) site is built by Cys24, Cys27, Cys40, and Cys43.

This sequence belongs to the universal ribosomal protein uS14 family. Zinc-binding uS14 subfamily. Part of the 30S ribosomal subunit. Contacts proteins S3 and S10. It depends on Zn(2+) as a cofactor.

In terms of biological role, binds 16S rRNA, required for the assembly of 30S particles and may also be responsible for determining the conformation of the 16S rRNA at the A site. This Streptococcus agalactiae serotype Ia (strain ATCC 27591 / A909 / CDC SS700) protein is Small ribosomal subunit protein uS14B.